A 264-amino-acid chain; its full sequence is Glutamate racemase (264 aa).

Residues 10-11 (DS) and 42-43 (YG) contribute to the substrate site. Catalysis depends on cysteine 73, which acts as the Proton donor/acceptor. 74-75 (NT) is a binding site for substrate. Cysteine 183 serves as the catalytic Proton donor/acceptor. 184–185 (TH) provides a ligand contact to substrate.

Belongs to the aspartate/glutamate racemases family.

The enzyme catalyses L-glutamate = D-glutamate. Its pathway is cell wall biogenesis; peptidoglycan biosynthesis. Its function is as follows. Provides the (R)-glutamate required for cell wall biosynthesis. In Streptococcus equi subsp. zooepidemicus (strain H70), this protein is Glutamate racemase.